We begin with the raw amino-acid sequence, 204 residues long: MSAQDKLIKPSHLITMDDIIREGNPTLRAVAKEVSLPLCDEDILLGEKMMQFLKHSQDPVMAEKLGLRAGVGLAAPQIDVSKRIIAVLVPNLPDKEGNPPKEAYSWQEVLYNPKIVSHSVQDAALSDGEGCLSVDRVVEGYVVRHARVTVDYYDKEGQQHRIKLKGYNAIVVQHEIDHINGVLFYDRINAKNPFETKEELLILD.

Fe cation is bound by residues C131 and H174. E175 is an active-site residue. H178 is a binding site for Fe cation.

It belongs to the polypeptide deformylase family. Requires Fe(2+) as cofactor.

It catalyses the reaction N-terminal N-formyl-L-methionyl-[peptide] + H2O = N-terminal L-methionyl-[peptide] + formate. In terms of biological role, removes the formyl group from the N-terminal Met of newly synthesized proteins. Requires at least a dipeptide for an efficient rate of reaction. N-terminal L-methionine is a prerequisite for activity but the enzyme has broad specificity at other positions. The chain is Peptide deformylase from Streptococcus pyogenes serotype M1.